Consider the following 529-residue polypeptide: Glucose-6-phosphate isomerase (529 aa).

Glu-322 functions as the Proton donor in the catalytic mechanism. Residues His-351 and Lys-455 contribute to the active site.

This sequence belongs to the GPI family.

It localises to the cytoplasm. It catalyses the reaction alpha-D-glucose 6-phosphate = beta-D-fructose 6-phosphate. It functions in the pathway carbohydrate biosynthesis; gluconeogenesis. It participates in carbohydrate degradation; glycolysis; D-glyceraldehyde 3-phosphate and glycerone phosphate from D-glucose: step 2/4. Catalyzes the reversible isomerization of glucose-6-phosphate to fructose-6-phosphate. This is Glucose-6-phosphate isomerase from Thermosynechococcus vestitus (strain NIES-2133 / IAM M-273 / BP-1).